We begin with the raw amino-acid sequence, 436 residues long: Glutamyl-tRNA reductase (436 aa).

Substrate contacts are provided by residues 49 to 52, S109, 114 to 116, and Q120; these read TCNR and EPQ. C50 (nucleophile) is an active-site residue. 189–194 provides a ligand contact to NADP(+); the sequence is GAGEMC.

Belongs to the glutamyl-tRNA reductase family. Homodimer.

It carries out the reaction (S)-4-amino-5-oxopentanoate + tRNA(Glu) + NADP(+) = L-glutamyl-tRNA(Glu) + NADPH + H(+). It participates in porphyrin-containing compound metabolism; protoporphyrin-IX biosynthesis; 5-aminolevulinate from L-glutamyl-tRNA(Glu): step 1/2. Functionally, catalyzes the NADPH-dependent reduction of glutamyl-tRNA(Glu) to glutamate 1-semialdehyde (GSA). This chain is Glutamyl-tRNA reductase, found in Pelobacter propionicus (strain DSM 2379 / NBRC 103807 / OttBd1).